The sequence spans 451 residues: D-ribitol-5-phosphate cytidylyltransferase (451 aa).

Residues 1 to 29 (MEAGPPGSARPAEPGPCLSGQRGADHTAS) form a disordered region.

This sequence belongs to the IspD/TarI cytidylyltransferase family. IspD subfamily. In terms of assembly, homodimer. As to expression, ubiquitously expressed, with high expression in brain.

Its subcellular location is the cytoplasm. The protein resides in the cytosol. It carries out the reaction D-ribitol 5-phosphate + CTP + H(+) = CDP-L-ribitol + diphosphate. The enzyme catalyses D-ribose 5-phosphate + CTP + H(+) = CDP-D-ribose + diphosphate. It catalyses the reaction D-ribulose 5-phosphate + CTP + H(+) = CDP-D-ribulose + diphosphate. It functions in the pathway protein modification; protein glycosylation. Functionally, cytidylyltransferase required for protein O-linked mannosylation. Catalyzes the formation of CDP-ribitol nucleotide sugar from D-ribitol 5-phosphate. CDP-ribitol is a substrate of FKTN during the biosynthesis of the phosphorylated O-mannosyl trisaccharide (N-acetylgalactosamine-beta-3-N-acetylglucosamine-beta-4-(phosphate-6-)mannose), a carbohydrate structure present in alpha-dystroglycan (DAG1), which is required for binding laminin G-like domain-containing extracellular proteins with high affinity. Shows activity toward other pentose phosphate sugars and mediates formation of CDP-ribulose or CDP-ribose using CTP and ribulose-5-phosphate or ribose-5-phosphate, respectively. Not Involved in dolichol production. The chain is D-ribitol-5-phosphate cytidylyltransferase from Homo sapiens (Human).